The following is a 253-amino-acid chain: 2-dehydro-3-deoxy-D-gluconate 5-dehydrogenase (253 aa).

14 to 38 contributes to the NAD(+) binding site; sequence VVTGCDTGLGQGMALGLAQAGCDIV. S145 lines the substrate pocket. Y158 serves as the catalytic Proton acceptor.

It belongs to the short-chain dehydrogenases/reductases (SDR) family. In terms of assembly, homotetramer.

It carries out the reaction 2-dehydro-3-deoxy-D-gluconate + NAD(+) = 3-deoxy-D-glycero-2,5-hexodiulosonate + NADH + H(+). The enzyme catalyses 4-pregnen-20,21-diol-3-one + NAD(+) = 21-hydroxyprogesterone + NADH + H(+). In terms of biological role, catalyzes the reversible reduction of 2,5-diketo-3-deoxygluconate (DKII or 4,6-dihydroxy-2,5-dioxohexanoate) into 2-keto-3-deoxygluconate (KDG or 2-dehydro-3-deoxygluconate) with a concomitant oxidation of NADH. To a lesser extent, can also reduce 5-keto-D-gluconate and oxidize D-gluconate and 1,2-propanediol. Together with KduI, seems to play a role in the catabolism of hexuronates under osmotic stress conditions, substituting for the regular hexuronate degrading enzymes UxaABC and UxuAB whose expression is repressed in these conditions. In vitro, also exhibits NADH-dependent 20-ketosteroid reductase activity against eukaryotic steroid hormone 11-deoxycorticosterone (11-DOC), which is converted into the product 4-pregnen-20,21-diol-3-one. In addition to 11-DOC, five other C21 steroid compounds (11-deoxycortisol, cortisol, corticosterone, cortisone, and 21-hydroxypregnenolone) are reduced by KduD, but steroids lacking the hydroxyl group at C21 position, such as pregnenolone, testosterone propionate, cortisone acetate, or progesterone, cannot be used as substrate. The protein is 2-dehydro-3-deoxy-D-gluconate 5-dehydrogenase of Escherichia coli (strain K12).